Reading from the N-terminus, the 450-residue chain is UDP-N-acetylmuramoylalanine--D-glutamate ligase (450 aa).

Residue 119–125 participates in ATP binding; sequence GSNGKTT.

This sequence belongs to the MurCDEF family.

The protein resides in the cytoplasm. It catalyses the reaction UDP-N-acetyl-alpha-D-muramoyl-L-alanine + D-glutamate + ATP = UDP-N-acetyl-alpha-D-muramoyl-L-alanyl-D-glutamate + ADP + phosphate + H(+). It participates in cell wall biogenesis; peptidoglycan biosynthesis. In terms of biological role, cell wall formation. Catalyzes the addition of glutamate to the nucleotide precursor UDP-N-acetylmuramoyl-L-alanine (UMA). This is UDP-N-acetylmuramoylalanine--D-glutamate ligase from Bacillus mycoides (strain KBAB4) (Bacillus weihenstephanensis).